Reading from the N-terminus, the 506-residue chain is Tetratricopeptide repeat protein 8 (506 aa).

The segment at 83–112 (RPGTSFARPKTSAKGVNPILRPTTNAGRPL) is disordered. 8 TPR repeats span residues 217-250 (YYWKNQLAKCYLRLGMLQDATKQLQSSLEQKKLI), 251-283 (ETFALLSKAYNRVDQPMAALKTYSAGLEVFPEN), 284-317 (VTMLTGMARVQEALGEYDESVKLYKRVLDAESNN), 319-351 (EAIACVATTYYYGGKPELAMRYYRRILQMGVSS), 353-385 (ELFLNIGLCCMAAQQFDFALSSILRAQSTMTDD), 388-421 (ADVWYNIGQILVDIGDLVSAARSFRIALSHDPDH), 423-455 (ESLVNLGILKHREGKIDEARSLYSSATSKNPYM), and 456-489 (FEGNYNLGLVSFTQGKYHECRELIEKALAAFPEH).

In terms of assembly, part of BBSome complex, that contains at least bbs-1, bbs-2, bbs-4, bbs-5, osm-12, bbs-8/ttc-8 and bbs-9. In terms of tissue distribution, expressed in head and tail neurons. Expressed in ciliated male tail-neurons. Expressed in thermosensory and CO(2) sensory AFD neurons.

The protein localises to the cell projection. It localises to the cilium. The protein resides in the cytoplasm. Its subcellular location is the cytoskeleton. It is found in the cilium basal body. The protein localises to the cilium axoneme. Functionally, component of the BBSome complex. The BBSome complex is thought to function as a coat complex required for sorting of specific membrane proteins to the primary cilia. The BBSome complex is required for ciliogenesis but is dispensable for centriolar satellite function. Required for proper BBSome complex assembly and its ciliary localization. Required for cilia biogenesis and both the assembly and movement of intraflagellar transport proteins along the ciliary axoneme. Plays a role in guanylyl cyclase localization in the ring-like structures at the base of the finger compartment in AFD sensory neurons. In Caenorhabditis elegans, this protein is Tetratricopeptide repeat protein 8.